Here is an 807-residue protein sequence, read N- to C-terminus: Probable phosphoketolase (807 aa).

The protein belongs to the XFP family. The cofactor is thiamine diphosphate.

The polypeptide is Probable phosphoketolase (Nitrosospira multiformis (strain ATCC 25196 / NCIMB 11849 / C 71)).